We begin with the raw amino-acid sequence, 848 residues long: Nuclear cap-binding protein subunit 1 (848 aa).

The MIF4G domain maps to 8–228 (LLRIGEKGPE…DLLDRIQSLA (221 aa)). The segment at 767–786 (EDDKPSAMDVDSENGNPKKS) is disordered.

Belongs to the NCBP1 family. Component of the nuclear cap-binding complex (CBC), a heterodimer composed of ABH1/CBP80 and CBP20 that interacts with m7GpppG-capped RNA. In terms of tissue distribution, expressed in all tissues analyzed, including roots, stems, leaves and flowers.

The protein resides in the nucleus. It is found in the cytoplasm. In terms of biological role, component of the cap-binding complex (CBC), which binds cotranscriptionally to the 5'-cap of pre-mRNAs and is involved in various processes such as pre-mRNA splicing and RNA-mediated gene silencing (RNAi) by microRNAs (miRNAs). The CBC complex is involved in miRNA-mediated RNA interference and is required for primary miRNA processing. In the CBC complex, ABH1/CBP80 does not bind directly capped RNAs (m7GpppG-capped RNA) but is required to stabilize the movement of the N-terminal loop of CBP20 and lock the CBC into a high affinity cap-binding state with the cap structure. Involved in flowering regulation, possibly by regulating pre-mRNA splicing of FLC gene. Acts as a negative regulator of abscisic acid signaling in guard cells. In Arabidopsis thaliana (Mouse-ear cress), this protein is Nuclear cap-binding protein subunit 1 (ABH1).